We begin with the raw amino-acid sequence, 100 residues long: Colipase-like protein 2 (100 aa).

A signal peptide spans 1-21; the sequence is MAAALALVAGVLSGAVLPLWS. Intrachain disulfides connect cysteine 34–cysteine 45, cysteine 40–cysteine 56, cysteine 44–cysteine 78, cysteine 66–cysteine 86, and cysteine 80–cysteine 97.

The protein belongs to the colipase family.

It localises to the secreted. This Homo sapiens (Human) protein is Colipase-like protein 2 (CLPSL2).